We begin with the raw amino-acid sequence, 200 residues long: Large ribosomal subunit protein uL4 (200 aa).

The interval 43–71 is disordered; that stretch reads RAQKTRAEVSGSGKKPWRQKGTGRARSGD.

It belongs to the universal ribosomal protein uL4 family. Part of the 50S ribosomal subunit.

In terms of biological role, one of the primary rRNA binding proteins, this protein initially binds near the 5'-end of the 23S rRNA. It is important during the early stages of 50S assembly. It makes multiple contacts with different domains of the 23S rRNA in the assembled 50S subunit and ribosome. Forms part of the polypeptide exit tunnel. This chain is Large ribosomal subunit protein uL4, found in Histophilus somni (strain 2336) (Haemophilus somnus).